A 613-amino-acid polypeptide reads, in one-letter code: Zinc metalloproteinase-disintegrin-like MTP8 (613 aa).

An N-terminal signal peptide occupies residues 1–20 (MIEVLLVTICFTVFPYQGSP). The propeptide occupies 21–191 (IILESGNVND…DETIEKISQL (171 aa)). The region spanning 205 to 401 (KYIELYVVVD…VRPQCILNKP (197 aa)) is the Peptidase M12B domain. Ca(2+) is bound at residue Glu-208. Asn-282 is a glycosylation site (N-linked (GlcNAc...) asparagine). Residue Asp-292 coordinates Ca(2+). 3 cysteine pairs are disulfide-bonded: Cys-316–Cys-396, Cys-356–Cys-380, and Cys-358–Cys-363. Zn(2+) is bound by residues His-341, His-345, and His-351. Residues Cys-396, Asn-399, Asn-414, Phe-416, Glu-418, Glu-421, and Asp-424 each contribute to the Ca(2+) site. Residues 409–495 (PPVCGNYFVE…KCPTDSFQRN (87 aa)) enclose the Disintegrin domain. 15 disulfide bridges follow: Cys-412-Cys-441, Cys-423-Cys-436, Cys-425-Cys-431, Cys-435-Cys-458, Cys-449-Cys-455, Cys-454-Cys-480, Cys-467-Cys-487, Cys-474-Cys-506, Cys-499-Cys-511, Cys-518-Cys-568, Cys-533-Cys-575, Cys-543-Cys-577, Cys-546-Cys-556, Cys-563-Cys-601, and Cys-595-Cys-606. Asn-437 is a glycosylation site (N-linked (GlcNAc...) asparagine). The D/ECD-tripeptide motif lies at 473–475 (DCD). Asp-475, Leu-476, Glu-478, and Asp-490 together coordinate Ca(2+). Residues Asn-550 and Asn-572 are each glycosylated (N-linked (GlcNAc...) asparagine).

This sequence belongs to the venom metalloproteinase (M12B) family. P-III subfamily. In terms of assembly, monomer. The cofactor is Zn(2+). In terms of tissue distribution, expressed by the venom gland.

The protein resides in the secreted. In terms of biological role, snake venom zinc metalloproteinase that may impair hemostasis in the prey. The chain is Zinc metalloproteinase-disintegrin-like MTP8 from Drysdalia coronoides (White-lipped snake).